Reading from the N-terminus, the 503-residue chain is Cytochrome P450 11B1, mitochondrial (503 aa).

The N-terminal 24 residues, 1–24 (MALRAKAEVCMAAPWLSLQRARAL), are a transit peptide targeting the mitochondrion. Residue Cys450 coordinates heme.

It belongs to the cytochrome P450 family. Requires heme as cofactor.

It is found in the mitochondrion inner membrane. The enzyme catalyses a steroid + 2 reduced [adrenodoxin] + O2 + 2 H(+) = an 11beta-hydroxysteroid + 2 oxidized [adrenodoxin] + H2O. It carries out the reaction 11-deoxycortisol + 2 reduced [adrenodoxin] + O2 + 2 H(+) = cortisol + 2 oxidized [adrenodoxin] + H2O. The catalysed reaction is 21-hydroxyprogesterone + 2 reduced [adrenodoxin] + O2 + 2 H(+) = corticosterone + 2 oxidized [adrenodoxin] + H2O. It catalyses the reaction 21-hydroxyprogesterone + 2 reduced [adrenodoxin] + O2 + 2 H(+) = 18-hydroxy-11-deoxycorticosterone + 2 oxidized [adrenodoxin] + H2O. The enzyme catalyses 21-hydroxyprogesterone + 2 reduced [adrenodoxin] + O2 + 2 H(+) = 19-hydroxy-11-deoxycorticosterone + 2 oxidized [adrenodoxin] + H2O. It carries out the reaction cortisol + 2 reduced [adrenodoxin] + O2 + 2 H(+) = 18-hydroxycortisol + 2 oxidized [adrenodoxin] + H2O. The catalysed reaction is 11-deoxycortisol + 2 reduced [adrenodoxin] + O2 + 2 H(+) = 18-hydroxy-11-deoxycortisol + 2 oxidized [adrenodoxin] + H2O. It functions in the pathway steroid biosynthesis; glucocorticoid biosynthesis. Its pathway is steroid hormone biosynthesis. Its function is as follows. A cytochrome P450 monooxygenase involved in the biosynthesis of adrenal corticoids. Catalyzes a variety of reactions that are essential for many species, including detoxification, defense, and the formation of endogenous chemicals like steroid hormones. Steroid 11beta, 18- and 19-hydroxylase with preferred regioselectivity at 11beta, then 18, and lastly 19. Catalyzes the hydroxylation of 11-deoxycortisol and 11-deoxycorticosterone (21-hydroxyprogesterone) at 11beta position, yielding cortisol or corticosterone, respectively, but cannot produce aldosterone. Mechanistically, uses molecular oxygen inserting one oxygen atom into a substrate for hydroxylation and reducing the second into a water molecule. Two electrons are provided by NADPH via a two-protein mitochondrial transfer system comprising flavoprotein FDXR (adrenodoxin/ferredoxin reductase) and nonheme iron-sulfur protein FDX1 or FDX2 (adrenodoxin/ferredoxin). Due to its lack of 18-oxidation activity, it is incapable of generating aldosterone. Could also be involved in the androgen metabolic pathway. The protein is Cytochrome P450 11B1, mitochondrial (CYP11B1) of Papio hamadryas ursinus (Chacma baboon).